Here is a 333-residue protein sequence, read N- to C-terminus: Ribosomal RNA small subunit methyltransferase H (333 aa).

Residues 31 to 33 (GGY), Asp-49, Phe-76, Asp-134, and Gln-141 contribute to the S-adenosyl-L-methionine site.

This sequence belongs to the methyltransferase superfamily. RsmH family.

Its subcellular location is the cytoplasm. It carries out the reaction cytidine(1402) in 16S rRNA + S-adenosyl-L-methionine = N(4)-methylcytidine(1402) in 16S rRNA + S-adenosyl-L-homocysteine + H(+). Specifically methylates the N4 position of cytidine in position 1402 (C1402) of 16S rRNA. This chain is Ribosomal RNA small subunit methyltransferase H, found in Wolbachia sp. subsp. Brugia malayi (strain TRS).